The following is a 338-amino-acid chain: MO25-like protein 2 (338 aa).

It belongs to the Mo25 family.

Its subcellular location is the cytoplasm. The protein resides in the cytoskeleton. It is found in the spindle pole. Regulates asymmetric cell division in Q.p neuroblast lineage. Plays a role in cell shedding during embryogenesis. This Caenorhabditis elegans protein is MO25-like protein 2 (mop-25.2).